Reading from the N-terminus, the 515-residue chain is Lysine--tRNA ligase (515 aa).

Mg(2+) contacts are provided by E425 and E432.

It belongs to the class-II aminoacyl-tRNA synthetase family. As to quaternary structure, homodimer. It depends on Mg(2+) as a cofactor.

The protein localises to the cytoplasm. The catalysed reaction is tRNA(Lys) + L-lysine + ATP = L-lysyl-tRNA(Lys) + AMP + diphosphate. The sequence is that of Lysine--tRNA ligase from Cupriavidus metallidurans (strain ATCC 43123 / DSM 2839 / NBRC 102507 / CH34) (Ralstonia metallidurans).